The sequence spans 354 residues: MIKAMALSSAGVVSHLHPPSFSSSSGLSVNRVLFRNRNASPCGLSLPILNPSRSVLVFARGKNRKGFVSSSSSSPKKNKKKSLDGADNGGGEEEEDPFEALFNLLEEDLKNDNSDDEEISEEELEALADELARALGVGDDVDDIDLFGSVTGDVDVDVDNDDDDNDDDDNDDDDDDSEEDERPTKLKNWQLKRLAYALKAGRRKTSIKNLAAEVCLDRAYVLELLRDPPPKLLMLSATLPDEKPPVAAPENSSPDPSPVESLSAEDVVVEPKEKVKDEAVHVMQQRWSAQKRVKKAHIETLEKVYRRSKRPTNAVVSSIVQVTNLPRKRVLKWFEDKRAEDGVPDKRAPYQAPV.

The Nuclear localization signal 1 motif lies at 63 to 70 (NRKGFVSS). Disordered stretches follow at residues 65-98 (KGFV…EDPF) and 151-186 (TGDV…PTKL). A compositionally biased stretch (acidic residues) spans 154-181 (VDVDVDNDDDDNDDDDNDDDDDDSEEDE). Residues 191–198 (LKRLAYAL) carry the Nuclear localization signal 2 motif. The disordered stretch occupies residues 243–264 (KPPVAAPENSSPDPSPVESLSA). The homeobox DNA-binding region spans 286 to 345 (RWSAQKRVKKAHIETLEKVYRRSKRPTNAVVSSIVQVTNLPRKRVLKWFEDKRAEDGVPD). The Nuclear localization signal 3 signature appears at 293–300 (VKKAHIET).

It is found in the nucleus. Functionally, may modulate chromatin structure by regulation of nucleosome assembly/disassembly. Homeodomain transcription factor that mediates jasmonic acid (JA)-mediated COI1-dependent and abscisic acid (ABA)-mediated PMR4-dependent resistance to infection by necrotrophic fungal pathogens (e.g. B.cinerea and P.cucumerina) and bacterial pathogens (e.g. P.syringae DC3000); this resistance involves at least callose deposition. Required for the P.fluorescens WCS417r-triggered JA-dependent induced systemic resistance (ISR) against both P.syringae DC3000 and H.arabidopsidis. Negative regulator of the ABA-dependent drought resistance. This chain is Protein OVEREXPRESSOR OF CATIONIC PEROXIDASE 3, found in Arabidopsis thaliana (Mouse-ear cress).